Here is a 302-residue protein sequence, read N- to C-terminus: Lysosomal thioesterase PPT2 (302 aa).

The signal sequence occupies residues 1–27 (MLGLCGQRLPAAWVLLLLPFLPLLLLA). A glycan (N-linked (GlcNAc...) asparagine) is linked at asparagine 60. 2 cysteine pairs are disulfide-bonded: cysteine 109–cysteine 117 and cysteine 165–cysteine 176. Residue serine 111 is the Nucleophile of the active site. N-linked (GlcNAc...) asparagine glycans are attached at residues asparagine 190 and asparagine 206. The active site involves aspartate 228. Asparagine 245 carries N-linked (GlcNAc...) asparagine glycosylation. Cysteine 276 and cysteine 296 are disulfide-bonded. Residue histidine 283 is part of the active site. N-linked (GlcNAc...) asparagine glycosylation is present at asparagine 289.

The protein belongs to the palmitoyl-protein thioesterase family. In terms of tissue distribution, broadly expressed, with highest levels in skeletal muscle.

It localises to the lysosome. The enzyme catalyses hexadecanoyl-CoA + H2O = hexadecanoate + CoA + H(+). The catalysed reaction is S-hexadecanoyl-N-acetylcysteamine + H2O = N-acetylcysteamine + hexadecanoate + H(+). Catalyzes the cleavage of thioester bonds from S-palmitoyl-CoA or S-palmitoyl-N-acetylcysteamine (unbranched structures) but does not have activity against palmitoylcysteine or palmitoylated proteins, branched structures or bulky head groups. Conversely, hydrolyzes both long and short chain fatty acyl-CoA substrate. Its function is as follows. Catalytically inactive due to lack of active site His-283. The polypeptide is Lysosomal thioesterase PPT2 (Homo sapiens (Human)).